A 635-amino-acid polypeptide reads, in one-letter code: Threonine--tRNA ligase (635 aa).

In terms of domain architecture, TGS spans 1-58 (MIHVTCNQEAFELPEGASAMDLANKMKQSHCFAGALINDQEKDLSTTLQDGDTVLFLT). A catalytic region spans residues 237-528 (DHRVLGTKLD…LIEHFKGRFP (292 aa)). The Zn(2+) site is built by Cys328, His379, and His505.

This sequence belongs to the class-II aminoacyl-tRNA synthetase family. As to quaternary structure, homodimer. The cofactor is Zn(2+).

It is found in the cytoplasm. The catalysed reaction is tRNA(Thr) + L-threonine + ATP = L-threonyl-tRNA(Thr) + AMP + diphosphate + H(+). Its function is as follows. Catalyzes the attachment of threonine to tRNA(Thr) in a two-step reaction: L-threonine is first activated by ATP to form Thr-AMP and then transferred to the acceptor end of tRNA(Thr). Also edits incorrectly charged L-seryl-tRNA(Thr). The protein is Threonine--tRNA ligase of Chlamydia trachomatis serovar A (strain ATCC VR-571B / DSM 19440 / HAR-13).